The following is a 127-amino-acid chain: SH2 domain-containing protein 1A (127 aa).

Positions 6–102 (VYHGKISRET…GIVIPLQYPV (97 aa)) constitute an SH2 domain. Positions 67–92 (ETAPGVHKRYFRKIKNLISAFQKPDQ) are interaction with FYN SH3 domain. At lysine 89 the chain carries N6-acetyllysine. The tract at residues 104–127 (KSSPRSTQGTTGIREDPDVCLKAP) is disordered. A compositionally biased stretch (basic and acidic residues) spans 116 to 127 (IREDPDVCLKAP).

Interacts with CD84, CD244, LY9, SLAMF1 and FYN. Interacts with NTRK1, NTRK2 and NTRK3.

Its subcellular location is the cytoplasm. Functionally, cytoplasmic adapter regulating receptors of the signaling lymphocytic activation molecule (SLAM) family such as SLAMF1, CD244, LY9, CD84, SLAMF6 and SLAMF7. In SLAM signaling seems to cooperate with SH2D1B/EAT-2. Initially it has been proposed that association with SLAMF1 prevents SLAMF1 binding to inhibitory effectors including INPP5D/SHIP1 and PTPN11/SHP-2. However, by simultaneous interactions, recruits FYN which subsequently phosphorylates and activates SLAMF1. Positively regulates CD244/2B4- and CD84-mediated natural killer (NK) cell functions. Can also promote CD48-, SLAMF6 -, LY9-, and SLAMF7-mediated NK cell activation. In the context of NK cell-mediated cytotoxicity enhances conjugate formation with target cells. May also regulate the activity of the neurotrophin receptors NTRK1, NTRK2 and NTRK3. The protein is SH2 domain-containing protein 1A (SH2D1A) of Saguinus oedipus (Cotton-top tamarin).